The chain runs to 171 residues: Serine acetyltransferase (171 aa).

Belongs to the transferase hexapeptide repeat family.

It localises to the cytoplasm. It carries out the reaction L-serine + acetyl-CoA = O-acetyl-L-serine + CoA. It functions in the pathway amino-acid biosynthesis; L-cysteine biosynthesis; L-cysteine from L-serine: step 1/2. The polypeptide is Serine acetyltransferase (cysE) (Helicobacter pylori (strain ATCC 700392 / 26695) (Campylobacter pylori)).